We begin with the raw amino-acid sequence, 90 residues long: Small ribosomal subunit protein bS20 (90 aa).

This sequence belongs to the bacterial ribosomal protein bS20 family.

Its function is as follows. Binds directly to 16S ribosomal RNA. This Rickettsia felis (strain ATCC VR-1525 / URRWXCal2) (Rickettsia azadi) protein is Small ribosomal subunit protein bS20.